The sequence spans 173 residues: Dual-action ribosomal maturation protein DarP (173 aa).

It belongs to the DarP family.

It localises to the cytoplasm. Member of a network of 50S ribosomal subunit biogenesis factors which assembles along the 30S-50S interface, preventing incorrect 23S rRNA structures from forming. Promotes peptidyl transferase center (PTC) maturation. This chain is Dual-action ribosomal maturation protein DarP, found in Pseudomonas putida (strain ATCC 700007 / DSM 6899 / JCM 31910 / BCRC 17059 / LMG 24140 / F1).